The primary structure comprises 67 residues: Probable Sec-independent protein translocase protein TatE (67 aa).

A helical membrane pass occupies residues 4–21; sequence ISITKLLVIAALVVLLFG. The tract at residues 44–67 is disordered; that stretch reads NDDDTGAKTPAASEAPAERLSHKE.

The protein belongs to the TatA/E family. TatE subfamily.

The protein localises to the cell inner membrane. Its function is as follows. Part of the twin-arginine translocation (Tat) system that transports large folded proteins containing a characteristic twin-arginine motif in their signal peptide across membranes. TatE shares overlapping functions with TatA. The chain is Probable Sec-independent protein translocase protein TatE from Cronobacter sakazakii (strain ATCC BAA-894) (Enterobacter sakazakii).